The sequence spans 159 residues: Protransforming growth factor alpha (159 aa).

The N-terminal stretch at 1–23 is a signal peptide; sequence MVPATGQLALLALGILLAVCQAL. Positions 24–38 are cleaved as a propeptide — removed in mature form; that stretch reads ENSTSPLSDSPVAAA. The Extracellular portion of the chain corresponds to 24-97; the sequence is ENSTSPLSDS…AVVAASQKKQ (74 aa). Asn25 is a glycosylation site (N-linked (GlcNAc...) asparagine). The EGF-like domain maps to 44–83; it reads NKCPDSHTQYCFHGTCRFLVQEEKPACVCHSGYVGVRCEH. Cystine bridges form between Cys46/Cys59, Cys54/Cys70, and Cys72/Cys81. Residues 89-159 constitute a propeptide, removed in mature form; sequence VVAASQKKQA…TACCHSETVV (71 aa). Residues 98–123 form a helical membrane-spanning segment; sequence AITALVVVSIVALAVLIITCVLIHCC. The Cytoplasmic portion of the chain corresponds to 124 to 159; that stretch reads QLRKHCEWCRALVCRHEKPSALLKGRTACCHSETVV. S-palmitoyl cysteine attachment occurs at residues Cys152 and Cys153.

In terms of assembly, interacts with the PDZ domains of SDCBP and SNTA1. The interaction with SDCBP, is required for the targeting to the cell surface. In the endoplasmic reticulum, in its immature form (i.e. with a prosegment and lacking full N-glycosylation), interacts with CNIH. In the Golgi apparatus, may form a complex with CNIH and GORASP2. Interacts (via cytoplasmic C-terminal domain) with NKD2. Interacts with MAGI3.

The protein resides in the secreted. The protein localises to the extracellular space. It is found in the cell membrane. Functionally, TGF alpha is a mitogenic polypeptide that is able to bind to the EGF receptor/EGFR and to act synergistically with TGF beta to promote anchorage-independent cell proliferation in soft agar. The protein is Protransforming growth factor alpha (Tgfa) of Mus musculus (Mouse).